A 102-amino-acid chain; its full sequence is Small ribosomal subunit protein bS18 (102 aa).

It belongs to the bacterial ribosomal protein bS18 family. In terms of assembly, part of the 30S ribosomal subunit. Forms a tight heterodimer with protein bS6.

Its function is as follows. Binds as a heterodimer with protein bS6 to the central domain of the 16S rRNA, where it helps stabilize the platform of the 30S subunit. The chain is Small ribosomal subunit protein bS18 from Orientia tsutsugamushi (strain Ikeda) (Rickettsia tsutsugamushi).